We begin with the raw amino-acid sequence, 347 residues long: NADH-ubiquinone oxidoreductase chain 2 (347 aa).

Transmembrane regions (helical) follow at residues 1 to 21, 25 to 45, 60 to 80, 89 to 109, 111 to 131, 149 to 169, 178 to 198, 201 to 221, 242 to 262, 274 to 294, and 323 to 343; these read MNPI…MIVM, HWLM…PILM, FLTQ…NLMF, IFNP…LGLS, FHFW…LILL, INLD…GWGG, IMAY…TYNP, TALN…LFML, SLIL…GFIP, DSII…YFYM, and MNFL…TPIM.

Belongs to the complex I subunit 2 family. As to quaternary structure, core subunit of respiratory chain NADH dehydrogenase (Complex I) which is composed of 45 different subunits. Interacts with TMEM242.

The protein localises to the mitochondrion inner membrane. The enzyme catalyses a ubiquinone + NADH + 5 H(+)(in) = a ubiquinol + NAD(+) + 4 H(+)(out). In terms of biological role, core subunit of the mitochondrial membrane respiratory chain NADH dehydrogenase (Complex I) which catalyzes electron transfer from NADH through the respiratory chain, using ubiquinone as an electron acceptor. Essential for the catalytic activity and assembly of complex I. This Ceratotherium simum (White rhinoceros) protein is NADH-ubiquinone oxidoreductase chain 2.